The sequence spans 235 residues: Phosphoribosylaminoimidazole-succinocarboxamide synthase (235 aa).

The protein belongs to the SAICAR synthetase family.

It catalyses the reaction 5-amino-1-(5-phospho-D-ribosyl)imidazole-4-carboxylate + L-aspartate + ATP = (2S)-2-[5-amino-1-(5-phospho-beta-D-ribosyl)imidazole-4-carboxamido]succinate + ADP + phosphate + 2 H(+). The protein operates within purine metabolism; IMP biosynthesis via de novo pathway; 5-amino-1-(5-phospho-D-ribosyl)imidazole-4-carboxamide from 5-amino-1-(5-phospho-D-ribosyl)imidazole-4-carboxylate: step 1/2. This chain is Phosphoribosylaminoimidazole-succinocarboxamide synthase, found in Clostridium botulinum (strain Eklund 17B / Type B).